Here is a 178-residue protein sequence, read N- to C-terminus: Nascent polypeptide-associated complex subunit alpha (178 aa).

The 65-residue stretch at 20–84 folds into the NAC-A/B domain; that stretch reads SKNEKKAREL…AKVDDMNKRI (65 aa). Positions 87 to 104 are enriched in low complexity; it reads AQAQQEQQEALTKAAADA. The tract at residues 87–142 is disordered; that stretch reads AQAQQEQQEALTKAAADAETADKSPESITNDLQNASLEDKTVEEDEGEVDETGLDS. Polar residues predominate over residues 112–122; it reads ESITNDLQNAS. Residues 127–139 are compositionally biased toward acidic residues; that stretch reads TVEEDEGEVDETG. In terms of domain architecture, UBA spans 140 to 178; it reads LDSKDIEIIVEQTQVSRAKAVKALRAHKGDMVNAIMELS.

It belongs to the NAC-alpha family. As to quaternary structure, part of the nascent polypeptide-associated complex (NAC), consisting of EGD2 and EGD1. NAC associates with ribosomes via EGD1.

The protein localises to the cytoplasm. The protein resides in the nucleus. Functionally, component of the nascent polypeptide-associated complex (NAC), a dynamic component of the ribosomal exit tunnel, protecting the emerging polypeptides from interaction with other cytoplasmic proteins to ensure appropriate nascent protein targeting. The NAC complex also promotes mitochondrial protein import by enhancing productive ribosome interactions with the outer mitochondrial membrane and blocks the inappropriate interaction of ribosomes translating non-secretory nascent polypeptides with translocation sites in the membrane of the endoplasmic reticulum. EGD2 may also be involved in transcription regulation. The protein is Nascent polypeptide-associated complex subunit alpha (EGD2) of Meyerozyma guilliermondii (strain ATCC 6260 / CBS 566 / DSM 6381 / JCM 1539 / NBRC 10279 / NRRL Y-324) (Yeast).